Consider the following 216-residue polypeptide: Oligoribonuclease (216 aa).

The Exonuclease domain occupies 6-171; sequence VVWMDCEMTG…ADIKESIREL (166 aa). Tyr-128 is an active-site residue.

Belongs to the oligoribonuclease family.

The protein resides in the cytoplasm. In terms of biological role, 3'-to-5' exoribonuclease specific for small oligoribonucleotides. This chain is Oligoribonuclease, found in Nocardia farcinica (strain IFM 10152).